Reading from the N-terminus, the 494-residue chain is Protein DETOXIFICATION 23 (494 aa).

The segment at 1–25 (MARREGEVTETLLKKSTENRGEDRD) is disordered. A run of 12 helical transmembrane segments spans residues 40 to 60 (LWVV…LSLI), 74 to 94 (AAYS…LLGM), 123 to 143 (IVLT…GPIL), 158 to 178 (IIAL…TCQM), 188 to 208 (IIAY…WLLV), 223 to 243 (LVAH…GGCT), 268 to 288 (GGMI…TGNL), 297 to 317 (ALAI…GFMA), 340 to 360 (MVVV…FLFL), 384 to 404 (LLAF…VAVG), 416 to 436 (LACY…VVGL), and 441 to 461 (VWLG…VMTM).

Belongs to the multi antimicrobial extrusion (MATE) (TC 2.A.66.1) family.

It is found in the membrane. This chain is Protein DETOXIFICATION 23, found in Arabidopsis thaliana (Mouse-ear cress).